A 341-amino-acid polypeptide reads, in one-letter code: S-adenosylmethionine:tRNA ribosyltransferase-isomerase (341 aa).

The protein belongs to the QueA family. As to quaternary structure, monomer.

It localises to the cytoplasm. It carries out the reaction 7-aminomethyl-7-carbaguanosine(34) in tRNA + S-adenosyl-L-methionine = epoxyqueuosine(34) in tRNA + adenine + L-methionine + 2 H(+). It functions in the pathway tRNA modification; tRNA-queuosine biosynthesis. Functionally, transfers and isomerizes the ribose moiety from AdoMet to the 7-aminomethyl group of 7-deazaguanine (preQ1-tRNA) to give epoxyqueuosine (oQ-tRNA). The polypeptide is S-adenosylmethionine:tRNA ribosyltransferase-isomerase (Pelodictyon phaeoclathratiforme (strain DSM 5477 / BU-1)).